We begin with the raw amino-acid sequence, 74 residues long: Large ribosomal subunit protein bL31 (74 aa).

Belongs to the bacterial ribosomal protein bL31 family. Type A subfamily. As to quaternary structure, part of the 50S ribosomal subunit.

Binds the 23S rRNA. This Phenylobacterium zucineum (strain HLK1) protein is Large ribosomal subunit protein bL31.